Reading from the N-terminus, the 347-residue chain is UPF0284 protein M1425_0030 (347 aa).

This sequence belongs to the UPF0284 family.

This is UPF0284 protein M1425_0030 from Saccharolobus islandicus (strain M.14.25 / Kamchatka #1) (Sulfolobus islandicus).